The primary structure comprises 229 residues: UPF0173 metal-dependent hydrolase SAOUHSC_01815 (229 aa).

Belongs to the UPF0173 family.

This chain is UPF0173 metal-dependent hydrolase SAOUHSC_01815, found in Staphylococcus aureus (strain NCTC 8325 / PS 47).